Here is a 728-residue protein sequence, read N- to C-terminus: Catalase-peroxidase 1 (728 aa).

Positions 91 to 218 form a cross-link, tryptophyl-tyrosyl-methioninium (Trp-Tyr) (with M-244); that stretch reads WHSAGTYRTA…LAAVQMGLIY (128 aa). The active-site Proton acceptor is the H92. Positions 218-244 form a cross-link, tryptophyl-tyrosyl-methioninium (Tyr-Met) (with W-91); it reads YVNPEGPDGNPDPVAAAHDIRETFARM. Position 259 (H259) interacts with heme b.

The protein belongs to the peroxidase family. Peroxidase/catalase subfamily. Homodimer or homotetramer. Heme b serves as cofactor. Formation of the three residue Trp-Tyr-Met cross-link is important for the catalase, but not the peroxidase activity of the enzyme.

It catalyses the reaction H2O2 + AH2 = A + 2 H2O. The enzyme catalyses 2 H2O2 = O2 + 2 H2O. In terms of biological role, bifunctional enzyme with both catalase and broad-spectrum peroxidase activity. This Burkholderia cenocepacia (strain HI2424) protein is Catalase-peroxidase 1.